A 99-amino-acid chain; its full sequence is Ferredoxin, heterocyst (99 aa).

The 2Fe-2S ferredoxin-type domain occupies 4–96 (YQVRLINKKE…NCTIKTHQEP (93 aa)). Positions 42, 47, 50, and 80 each coordinate [2Fe-2S] cluster.

This sequence belongs to the 2Fe2S plant-type ferredoxin family. [2Fe-2S] cluster is required as a cofactor.

Functionally, ferredoxins are iron-sulfur proteins that transfer electrons in a wide variety of metabolic reactions. The polypeptide is Ferredoxin, heterocyst (fdxH) (Microchaete diplosiphon (Fremyella diplosiphon)).